A 91-amino-acid polypeptide reads, in one-letter code: Small ribosomal subunit protein uS19 (91 aa).

Belongs to the universal ribosomal protein uS19 family.

Protein S19 forms a complex with S13 that binds strongly to the 16S ribosomal RNA. The polypeptide is Small ribosomal subunit protein uS19 (Bordetella petrii (strain ATCC BAA-461 / DSM 12804 / CCUG 43448)).